We begin with the raw amino-acid sequence, 338 residues long: MEMO1 family protein MHO1 (338 aa).

The protein belongs to the MEMO1 family.

The protein resides in the cytoplasm. The protein localises to the nucleus. Functionally, plays a role in haploid invasive growth under conditions of nutrient insufficiency, suggesting that the function of the MEMO1 family in cell motility/invasion is conserved across species. This Saccharomyces cerevisiae (strain ATCC 204508 / S288c) (Baker's yeast) protein is MEMO1 family protein MHO1.